The primary structure comprises 38 residues: Cytochrome b6-f complex subunit 5 (38 aa).

The chain crosses the membrane as a helical span at residues 5–25 (LLSGIVLGSIPITLAGSFVTA).

This sequence belongs to the PetG family. In terms of assembly, the 4 large subunits of the cytochrome b6-f complex are cytochrome b6, subunit IV (17 kDa polypeptide, PetD), cytochrome f and the Rieske protein, while the 4 small subunits are PetG, PetL, PetM and PetN. The complex functions as a dimer.

It localises to the plastid. It is found in the chloroplast thylakoid membrane. Functionally, component of the cytochrome b6-f complex, which mediates electron transfer between photosystem II (PSII) and photosystem I (PSI), cyclic electron flow around PSI, and state transitions. PetG is required for either the stability or assembly of the cytochrome b6-f complex. The polypeptide is Cytochrome b6-f complex subunit 5 (Huperzia lucidula (Shining clubmoss)).